The primary structure comprises 501 residues: Betaine aldehyde dehydrogenase, chloroplastic (501 aa).

A chloroplast-targeting transit peptide spans 1–7 (MAIRVPS). 238 to 243 (GSTATG) contributes to the NAD(+) binding site. The active-site Proton acceptor is the glutamate 260. Catalysis depends on cysteine 294, which acts as the Nucleophile.

The protein belongs to the aldehyde dehydrogenase family. Homodimer.

The protein resides in the plastid. Its subcellular location is the chloroplast. The enzyme catalyses betaine aldehyde + NAD(+) + H2O = glycine betaine + NADH + 2 H(+). The protein operates within amine and polyamine biosynthesis; betaine biosynthesis via choline pathway; betaine from betaine aldehyde: step 1/1. The chain is Betaine aldehyde dehydrogenase, chloroplastic (BADH4) from Amaranthus hypochondriacus (Prince-of-Wales feather).